Consider the following 901-residue polypeptide: Aconitate hydratase A (901 aa).

3 residues coordinate [4Fe-4S] cluster: cysteine 443, cysteine 509, and cysteine 512.

The protein belongs to the aconitase/IPM isomerase family. As to quaternary structure, monomer. [4Fe-4S] cluster is required as a cofactor.

It catalyses the reaction citrate = D-threo-isocitrate. The catalysed reaction is (2S,3R)-3-hydroxybutane-1,2,3-tricarboxylate = 2-methyl-cis-aconitate + H2O. It functions in the pathway carbohydrate metabolism; tricarboxylic acid cycle; isocitrate from oxaloacetate: step 2/2. The protein operates within organic acid metabolism; propanoate degradation. In terms of biological role, involved in the catabolism of short chain fatty acids (SCFA) via the tricarboxylic acid (TCA)(acetyl degradation route) and probably the 2-methylcitrate cycle I (propionate degradation route). Catalyzes the reversible isomerization of citrate to isocitrate via cis-aconitate. Could catalyze the hydration of 2-methyl-cis-aconitate to yield (2R,3S)-2-methylisocitrate. The apo form of AcnA functions as a RNA-binding regulatory protein. The chain is Aconitate hydratase A (acnA) from Staphylococcus epidermidis (strain ATCC 35984 / DSM 28319 / BCRC 17069 / CCUG 31568 / BM 3577 / RP62A).